The following is a 641-amino-acid chain: Frizzled-1 (641 aa).

Residues 1-68 (MAEEAVPSES…WLLEAPLLLG (68 aa)) form the signal peptide. Over 69-316 (VRAQPAGQVS…PEELRFSRTW (248 aa)) the chain is Extracellular. Residues 74–99 (AGQVSGPGQQRPPPPQPQQGGQQYNG) are disordered. The region spanning 106-224 (PDHGYCQPIS…HGAGELCVGQ (119 aa)) is the FZ domain. Cystine bridges form between cysteine 111–cysteine 172, cysteine 119–cysteine 165, cysteine 156–cysteine 192, cysteine 182–cysteine 221, and cysteine 186–cysteine 209. A glycan (N-linked (GlcNAc...) asparagine) is linked at asparagine 125. N-linked (GlcNAc...) asparagine glycosylation occurs at asparagine 225. A helical membrane pass occupies residues 317-337 (IGIWSVLCCASTLFTVLTYLV). Residues 338–348 (DMRRFSYPERP) lie on the Cytoplasmic side of the membrane. Residues 349–369 (IIFLSGCYTAVAVAYIAGFLL) form a helical membrane-spanning segment. The Extracellular portion of the chain corresponds to 370-396 (EDRVVCNDKFAEDGARTVAQGTKKEGC). A helical transmembrane segment spans residues 397-417 (TILFMMLYFFSMASSIWWVIL). Residues 418-439 (SLTWFLAAGMKWGHEAIEANSQ) lie on the Cytoplasmic side of the membrane. A helical membrane pass occupies residues 440 to 460 (YFHLAAWAVPAIKTITILALG). Residues 461–483 (QVDGDVLSGVCFVGLNNVDALRG) lie on the Extracellular side of the membrane. The helical transmembrane segment at 484–504 (FVLAPLFVYLFIGTSFLLAGF) threads the bilayer. At 505-530 (VSLFRIRTIMKHDGTKTEKLEKLMVR) the chain is on the cytoplasmic side. A helical membrane pass occupies residues 531-551 (IGVFSVLYTVPATIVIACYFY). Topologically, residues 552 to 595 (EQAFRDQWERSWVAQSCKSYAIPCPHLQGGGGVPPHPPMSPDFT) are extracellular. A helical membrane pass occupies residues 596–616 (VFMIKYLMTLIVGITSGFWIW). Residues 617-641 (SGKTLNSWRKFYTRLTNSKQGETTV) are Cytoplasmic-facing. Positions 619 to 624 (KTLNSW) match the Lys-Thr-X-X-X-Trp motif, mediates interaction with the PDZ domain of Dvl family members motif. A PDZ-binding motif is present at residues 639-641 (TTV).

This sequence belongs to the G-protein coupled receptor Fz/Smo family. In terms of assembly, interacts with MYOC. Interacts with WNT7B. Post-translationally, ubiquitinated by ZNRF3, leading to its degradation by the proteasome. Widely expressed. Most abundant in kidney, liver, uterus, ovary and heart. Lower levels seen in brain and intestine. Extremely low in calvaria, mammary glands and testis.

It localises to the cell membrane. Functionally, receptor for Wnt proteins. Activated by WNT3A, WNT3, WNT1 and to a lesser extent WNT2, but apparently not by WNT4, WNT5A, WNT5B, WNT6 or WNT7A. Contradictory results have been reported for activation by WNT7B. Functions in the canonical Wnt/beta-catenin signaling pathway. The canonical Wnt/beta-catenin signaling pathway leads to the activation of disheveled proteins, inhibition of GSK-3 kinase, nuclear accumulation of beta-catenin and activation of Wnt target genes. A second signaling pathway involving PKC and calcium fluxes has been seen for some family members, but it is not yet clear if it represents a distinct pathway or if it can be integrated in the canonical pathway, as PKC seems to be required for Wnt-mediated inactivation of GSK-3 kinase. Both pathways seem to involve interactions with G-proteins. May be involved in transduction and intercellular transmission of polarity information during tissue morphogenesis and/or in differentiated tissues. This Rattus norvegicus (Rat) protein is Frizzled-1 (Fzd1).